A 146-amino-acid polypeptide reads, in one-letter code: Keratin-associated protein 4-1 (146 aa).

18 repeat units span residues 5-9 (CCGSV), 24-28 (CCRPS), 29-33 (CCQTT), 34-38 (CCCPS), 44-48 (CCRPS), 54-58 (CCQTT), 59-63 (CCRPS), 64-68 (CCHPV), 69-73 (CCQTT), 83-87 (CCRPL), 88-92 (CCQTT), 102-106 (CCRPL), 107-111 (CCQTT), 121-125 (CCRPL), 126-130 (CCQTT), 131-135 (CCRAT), 136-140 (CCRPS), and 141-145 (CCGSS). The interval 5-145 (CCGSVCSDQG…CCRPSCCGSS (141 aa)) is 18 X 5 AA repeats of C-C-[GRQC]-[SPT]-[VSTL].

The protein belongs to the KRTAP type 4 family. As to quaternary structure, interacts with hair keratins. In terms of tissue distribution, expressed in the hair follicles.

Functionally, in the hair cortex, hair keratin intermediate filaments are embedded in an interfilamentous matrix, consisting of hair keratin-associated proteins (KRTAP), which are essential for the formation of a rigid and resistant hair shaft through their extensive disulfide bond cross-linking with abundant cysteine residues of hair keratins. The matrix proteins include the high-sulfur and high-glycine-tyrosine keratins. The polypeptide is Keratin-associated protein 4-1 (KRTAP4-1) (Homo sapiens (Human)).